The following is a 528-amino-acid chain: MDSLADQIRRRRTFAIISHPDAGKTTLTEKLLLYGGAIRLAGAVKGRKAARAATSDWMEIEKQRGISVTTSVMQFEYGGCMVNILDTPGHQDFSEDTYRTLEAADSAVMLIDAAKGVEPQTIKLFQVCRMRGIPIFTFVNKLDREGKDPFALMQEIEDVLGMRTCPMNWPVGMGSTFKGVYDRQKGHVELFDNRDHGQTKARVETTGVDDPALSAVLGEDLHRRLVEEIELLDVAGDPWDFDRFRRGDLSPLFWGSALTNFGVQSFLEYFLKLAPAPAPRLAGDRLVDPEEPRFSAFVFKIQANMNPAHRDRIAFMRIVSGRFERGMDVQHVRLGKKVRLSQPQQFMAQDRQIVEEAYAGDIIGVFDPGIFRIGDTLCTGEPVAFEGIPSFSPEHFARVRFKDAMKSKHFRKGLEELTEEGAIQVFYATQPGHPDPILGAVGELQFEVFQHRMRHEYGVEVILDRLPYEVARWVEGEGYQPRRFWGTDHMAVTDRDGRNVLLFRNEWTMRYVVEQNPGLIFRATAQAR.

One can recognise a tr-type G domain in the interval 9–280; the sequence is RRRRTFAIIS…LKLAPAPAPR (272 aa). GTP-binding positions include 18-25, 86-90, and 140-143; these read SHPDAGKT, DTPGH, and NKLD.

Belongs to the TRAFAC class translation factor GTPase superfamily. Classic translation factor GTPase family. PrfC subfamily.

It localises to the cytoplasm. In terms of biological role, increases the formation of ribosomal termination complexes and stimulates activities of RF-1 and RF-2. It binds guanine nucleotides and has strong preference for UGA stop codons. It may interact directly with the ribosome. The stimulation of RF-1 and RF-2 is significantly reduced by GTP and GDP, but not by GMP. This Symbiobacterium thermophilum (strain DSM 24528 / JCM 14929 / IAM 14863 / T) protein is Peptide chain release factor 3.